Reading from the N-terminus, the 313-residue chain is uncharacterized protein (313 aa).

This is an uncharacterized protein from Treponema pallidum (strain Nichols).